A 502-amino-acid polypeptide reads, in one-letter code: Putative diacyglycerol O-acyltransferase MT1809 (502 aa).

The active-site Proton acceptor is the histidine 174.

Belongs to the long-chain O-acyltransferase family.

The catalysed reaction is an acyl-CoA + a 1,2-diacyl-sn-glycerol = a triacyl-sn-glycerol + CoA. The protein operates within glycerolipid metabolism; triacylglycerol biosynthesis. The chain is Putative diacyglycerol O-acyltransferase MT1809 from Mycobacterium tuberculosis (strain CDC 1551 / Oshkosh).